Here is a 350-residue protein sequence, read N- to C-terminus: Nicotinate-nucleotide--dimethylbenzimidazole phosphoribosyltransferase (350 aa).

E316 (proton acceptor) is an active-site residue.

This sequence belongs to the CobT family.

The enzyme catalyses 5,6-dimethylbenzimidazole + nicotinate beta-D-ribonucleotide = alpha-ribazole 5'-phosphate + nicotinate + H(+). It participates in nucleoside biosynthesis; alpha-ribazole biosynthesis; alpha-ribazole from 5,6-dimethylbenzimidazole: step 1/2. In terms of biological role, catalyzes the synthesis of alpha-ribazole-5'-phosphate from nicotinate mononucleotide (NAMN) and 5,6-dimethylbenzimidazole (DMB). The sequence is that of Nicotinate-nucleotide--dimethylbenzimidazole phosphoribosyltransferase from Bradyrhizobium diazoefficiens (strain JCM 10833 / BCRC 13528 / IAM 13628 / NBRC 14792 / USDA 110).